Consider the following 119-residue polypeptide: NAD(P)H-quinone oxidoreductase subunit M (119 aa).

It belongs to the complex I NdhM subunit family. As to quaternary structure, NDH-1 can be composed of about 15 different subunits; different subcomplexes with different compositions have been identified which probably have different functions.

It is found in the cellular thylakoid membrane. It catalyses the reaction a plastoquinone + NADH + (n+1) H(+)(in) = a plastoquinol + NAD(+) + n H(+)(out). The catalysed reaction is a plastoquinone + NADPH + (n+1) H(+)(in) = a plastoquinol + NADP(+) + n H(+)(out). NDH-1 shuttles electrons from an unknown electron donor, via FMN and iron-sulfur (Fe-S) centers, to quinones in the respiratory and/or the photosynthetic chain. The immediate electron acceptor for the enzyme in this species is believed to be plastoquinone. Couples the redox reaction to proton translocation, and thus conserves the redox energy in a proton gradient. Cyanobacterial NDH-1 also plays a role in inorganic carbon-concentration. The sequence is that of NAD(P)H-quinone oxidoreductase subunit M from Gloeothece citriformis (strain PCC 7424) (Cyanothece sp. (strain PCC 7424)).